The following is a 510-amino-acid chain: Beta-glucosidase 40 (510 aa).

The N-terminal stretch at 1–29 (MAHRRLIMTMTKMMMMVTMMMMMDKTCIC) is a signal peptide. Residues Q51, H152, and 197 to 198 (NE) contribute to the a beta-D-glucoside site. The Proton donor role is filled by E198. The cysteines at positions 217 and 225 are disulfide-linked. N-linked (GlcNAc...) asparagine glycosylation is found at N229 and N278. Y341 contacts a beta-D-glucoside. An N-linked (GlcNAc...) asparagine glycan is attached at N349. A beta-D-glucoside contacts are provided by residues E414, W464, 471-472 (EW), and F480. The active-site Nucleophile is the E414. N507 carries an N-linked (GlcNAc...) asparagine glycan.

The protein belongs to the glycosyl hydrolase 1 family.

The catalysed reaction is Hydrolysis of terminal, non-reducing beta-D-glucosyl residues with release of beta-D-glucose.. This Arabidopsis thaliana (Mouse-ear cress) protein is Beta-glucosidase 40.